We begin with the raw amino-acid sequence, 2572 residues long: Highly reducing polyketide synthase phiA (2572 aa).

Residues 11–438 enclose the Ketosynthase family 3 (KS3) domain; sequence IMPIAVVGMS…GANAHVIIES (428 aa). Active-site for beta-ketoacyl synthase activity residues include Cys-186, His-321, and His-361. Positions 591-917 constitute a Malonyl-CoA:ACP transacylase (MAT) domain; that stretch reads FVFTGQGAQW…HTALARKKDA (327 aa). Residues 983–1120 are N-terminal hotdog fold; that stretch reads VDLLGVLERN…GLISVQTPQK (138 aa). Residues 983-1307 form the PKS/mFAS DH domain; that stretch reads VDLLGVLERN…CATLERDGGG (325 aa). Residue His-1015 is the Proton acceptor; for dehydratase activity of the active site. The segment at 1150 to 1307 is C-terminal hotdog fold; it reads RKEIDVSQFY…CATLERDGGG (158 aa). Asp-1215 (proton donor; for dehydratase activity) is an active-site residue. The methyltransferase (CMeT) domain stretch occupies residues 1353–1654; it reads LERAAFYYLH…LSSSTNKTNY (302 aa). Positions 1870 to 2182 constitute an Enoyl reductase (ER) domain; sequence GLLDTLHFTE…TGGHMGKLVA (313 aa). Positions 2206 to 2383 constitute a Ketoreductase (KR) domain; it reads ASYLLVGGLG…ATTLDLGAIS (178 aa). Positions 2484 to 2561 constitute a Carrier domain; sequence AASEAICDAL…GLAAKIAKRS (78 aa). Residue Ser-2521 is modified to O-(pantetheine 4'-phosphoryl)serine.

Pantetheine 4'-phosphate is required as a cofactor.

The protein operates within secondary metabolite biosynthesis. Its function is as follows. Highly reducing polyketide synthase; part of the gene cluster that mediates the biosynthesis of the antihypercholesterolemic agents phomoidrides which are dimeric anhydrides. The pathway begins with the highly reducing polyketide synthase phiA that catalyzes the formation of a C12-fatty acyl-ACP, starting from one acetate and 5 malonate units. The hydrolase phiM is involved in the release of the C12-fatty acyl chain from phiA. The alkylcitrate synthase (ACS) phiJ and the alkylcitrate dehydratase (ACDH) phiI then give rise to decarboxylated monomeric anhydrides by coupling the C12-fatty acyl chain with oxalacetic acid. The cyclase phiC is responsible for the dimerization of the monomeric anhydrides which leads to the production of prephomoidride that contains the characteristic bicyclo[4.3.1]deca-1,6-diene system of phomoidrides. Iterative oxidation catalyzed by the alpha-ketoglutarate-dependent dioxygenase phiK produced then phomoidride A. Finally, the methyltransferase phiE converts phomoidride A to phomoidride B via an acetalization reaction. The phosphatidylethanolamine-binding protein phiB and phiN are not essential for dimerization and their functions have still to be determined. This chain is Highly reducing polyketide synthase phiA, found in Fungal sp. (strain ATCC 74256).